The following is a 500-amino-acid chain: Toluene-4-monooxygenase system, hydroxylase component subunit alpha (500 aa).

E104, E134, H137, E197, E231, and H234 together coordinate Fe cation.

Belongs to the TmoA/XamoA family. In terms of assembly, the alkene monooxygenase multicomponent enzyme system is composed of an electron transfer component and a monooxygenase component interacting with the effector protein TmoD. The electron transfer component is composed of a ferredoxin reductase (TmoF) and a ferredoxin (TmoC), and the monooxygenase component is formed by a heterohexamer (dimer of heterotrimers) of two alpha subunits (TmoA), two beta subunits (TmoE) and two gamma subunits (TmoB). Requires Fe(2+) as cofactor.

The enzyme catalyses toluene + NADH + O2 + H(+) = 4-methylphenol + NAD(+) + H2O. It functions in the pathway xenobiotic degradation; toluene degradation. Its activity is regulated as follows. Inhibited by Zn(2+) and Cu(2+). Its function is as follows. Component of the toluene-4-monooxygenase multicomponent enzyme system which catalyzes the O2- and NADH-dependent hydroxylation of toluene to form p-cresol. Also able to convert benzene to phenol, catechol, and 1,2,3-trihydroxybenzene by successive hydroxylations. This Ectopseudomonas mendocina (Pseudomonas mendocina) protein is Toluene-4-monooxygenase system, hydroxylase component subunit alpha.